The following is a 292-amino-acid chain: Alpha-soluble NSF attachment protein (292 aa).

Ser-2 carries the N-acetylserine modification. A Glycyl lysine isopeptide (Lys-Gly) (interchain with G-Cter in ubiquitin) cross-link involves residue Lys-261.

Belongs to the SNAP family. In terms of assembly, binds to vacuolar cis-SNARE complexes composed of the v-SNAREs NYV1, VTI1 and YKT6, and the t-SNAREs VAM3 and VAM7. Interacts with SEC18.

The protein resides in the membrane. SNARE complex protein that binds to cis-SNARE complexes on membranes and is required for vesicular transport between the endoplasmic reticulum and the Golgi apparatus and for homotypic vacuole fusion. During the priming step of membrane fusion, is released from cis-SNARE complexes by SEC18 to establish a pool of unpaired SNAREs, which are required for interactions in trans during docking and fusion steps. Can displace HOPS from SNARE complexes, which may be a prerequisite for trans-SNARE complex disassembly and subsequent rounds of priming, docking and fusion. This is Alpha-soluble NSF attachment protein (SEC17) from Saccharomyces cerevisiae (strain ATCC 204508 / S288c) (Baker's yeast).